The chain runs to 262 residues: Phosphatidylglycerol--prolipoprotein diacylglyceryl transferase (262 aa).

The next 4 helical transmembrane spans lie at 17–37 (LAIH…YALG), 57–77 (LIFY…VLFY), 95–115 (GGMS…LFAH), and 119–139 (LGFF…LAAG). Arg140 contributes to the a 1,2-diacyl-sn-glycero-3-phospho-(1'-sn-glycerol) binding site. 3 helical membrane-spanning segments follow: residues 173–193 (PSQL…LWWY), 200–220 (AGQV…LVEF), and 227–247 (FLGL…PMVL).

Belongs to the Lgt family.

It localises to the cell inner membrane. It catalyses the reaction L-cysteinyl-[prolipoprotein] + a 1,2-diacyl-sn-glycero-3-phospho-(1'-sn-glycerol) = an S-1,2-diacyl-sn-glyceryl-L-cysteinyl-[prolipoprotein] + sn-glycerol 1-phosphate + H(+). The protein operates within protein modification; lipoprotein biosynthesis (diacylglyceryl transfer). Catalyzes the transfer of the diacylglyceryl group from phosphatidylglycerol to the sulfhydryl group of the N-terminal cysteine of a prolipoprotein, the first step in the formation of mature lipoproteins. This Bordetella parapertussis (strain 12822 / ATCC BAA-587 / NCTC 13253) protein is Phosphatidylglycerol--prolipoprotein diacylglyceryl transferase.